The primary structure comprises 116 residues: Protein Rev (116 aa).

2 positions are modified to phosphoserine; by host CK2: Ser5 and Ser8. The homomultimerization stretch occupies residues 18 to 26; sequence LIKVLYQSN. The disordered stretch occupies residues 23-48; that stretch reads YQSNPPPSSEGTRQARRNRRRRWRER. A Nuclear localization signal and RNA-binding (RRE) motif is present at residues 34 to 50; sequence TRQARRNRRRRWRERQR. A compositionally biased stretch (basic residues) spans 36–47; that stretch reads QARRNRRRRWRE. The Nuclear export signal and binding to XPO1 signature appears at 73-84; sequence FQLPPLERLTLD. Residues 90 to 116 form a disordered region; sequence GTSGTQGVGSPQILVESPPVLDSGTKE. Ser92 and Ser99 each carry phosphoserine; by host.

This sequence belongs to the HIV-1 REV protein family. Homomultimer; when bound to the RRE. Multimeric assembly is essential for activity and may involve XPO1. Binds to human KPNB1, XPO1, TNPO1, RANBP5 and IPO7. Interacts with the viral Integrase. Interacts with human KHDRBS1. Interacts with human NAP1; this interaction decreases Rev multimerization and stimulates its activity. Interacts with human DEAD-box helicases DDX3 and DDX24; these interactions may serve for viral RNA export to the cytoplasm and packaging, respectively. Interacts with human PSIP1; this interaction may inhibit HIV-1 DNA integration by promoting dissociation of the Integrase-LEDGF/p75 complex. Asymmetrically arginine dimethylated at one site by host PRMT6. Methylation impairs the RNA-binding activity and export of viral RNA from the nucleus to the cytoplasm. Post-translationally, phosphorylated by protein kinase CK2. Presence of, and maybe binding to the N-terminus of the regulatory beta subunit of CK2 is necessary for CK2-mediated Rev's phosphorylation.

It localises to the host nucleus. Its subcellular location is the host nucleolus. The protein localises to the host cytoplasm. Its function is as follows. Escorts unspliced or incompletely spliced viral pre-mRNAs (late transcripts) out of the nucleus of infected cells. These pre-mRNAs carry a recognition sequence called Rev responsive element (RRE) located in the env gene, that is not present in fully spliced viral mRNAs (early transcripts). This function is essential since most viral proteins are translated from unspliced or partially spliced pre-mRNAs which cannot exit the nucleus by the pathway used by fully processed cellular mRNAs. Rev itself is translated from a fully spliced mRNA that readily exits the nucleus. Rev's nuclear localization signal (NLS) binds directly to KPNB1/Importin beta-1 without previous binding to KPNA1/Importin alpha-1. KPNB1 binds to the GDP bound form of RAN (Ran-GDP) and targets Rev to the nucleus. In the nucleus, the conversion from Ran-GDP to Ran-GTP dissociates Rev from KPNB1 and allows Rev's binding to the RRE in viral pre-mRNAs. Rev multimerization on the RRE via cooperative assembly exposes its nuclear export signal (NES) to the surface. Rev can then form a complex with XPO1/CRM1 and Ran-GTP, leading to nuclear export of the complex. Conversion from Ran-GTP to Ran-GDP mediates dissociation of the Rev/RRE/XPO1/RAN complex, so that Rev can return to the nucleus for a subsequent round of export. Beside KPNB1, also seems to interact with TNPO1/Transportin-1, RANBP5/IPO5 and IPO7/RANBP7 for nuclear import. The nucleoporin-like HRB/RIP is an essential cofactor that probably indirectly interacts with Rev to release HIV RNAs from the perinuclear region to the cytoplasm. This is Protein Rev from Human immunodeficiency virus type 1 group M subtype B (isolate YU-2) (HIV-1).